Reading from the N-terminus, the 193-residue chain is Holliday junction branch migration complex subunit RuvA (193 aa).

Residues 1–64 (MIGRIAGILL…EDAHLLYGFL (64 aa)) form a domain I region. The segment at 65-139 (TPQERTTFRE…GKLGADLGAL (75 aa)) is domain II. Positions 139–143 (LAGAA) are flexible linker. Residues 144-193 (SASDHATDILNALLALGYSEKEGLAAIKNVPAGTGVSEGIKLALKALSKA) are domain III.

It belongs to the RuvA family. Homotetramer. Forms an RuvA(8)-RuvB(12)-Holliday junction (HJ) complex. HJ DNA is sandwiched between 2 RuvA tetramers; dsDNA enters through RuvA and exits via RuvB. An RuvB hexamer assembles on each DNA strand where it exits the tetramer. Each RuvB hexamer is contacted by two RuvA subunits (via domain III) on 2 adjacent RuvB subunits; this complex drives branch migration. In the full resolvosome a probable DNA-RuvA(4)-RuvB(12)-RuvC(2) complex forms which resolves the HJ.

The protein localises to the cytoplasm. Functionally, the RuvA-RuvB-RuvC complex processes Holliday junction (HJ) DNA during genetic recombination and DNA repair, while the RuvA-RuvB complex plays an important role in the rescue of blocked DNA replication forks via replication fork reversal (RFR). RuvA specifically binds to HJ cruciform DNA, conferring on it an open structure. The RuvB hexamer acts as an ATP-dependent pump, pulling dsDNA into and through the RuvAB complex. HJ branch migration allows RuvC to scan DNA until it finds its consensus sequence, where it cleaves and resolves the cruciform DNA. In Burkholderia cenocepacia (strain HI2424), this protein is Holliday junction branch migration complex subunit RuvA.